Reading from the N-terminus, the 827-residue chain is Centrosomal protein of 95 kDa (827 aa).

Disordered stretches follow at residues 115-145 (ISES…ERTE), 183-249 (GDTA…MVPS), 308-372 (FLTS…MSEK), 388-476 (LGDR…DSCH), and 489-558 (ELRK…KASP). Basic and acidic residues predominate over residues 123–145 (SETEQYSKDSHGEEAGEDLERTE). The segment covering 187–199 (HTFSQRSNGAQNS) has biased composition (polar residues). Composition is skewed to basic and acidic residues over residues 327 to 343 (EATR…DENR) and 360 to 372 (PLTE…MSEK). 3 positions are modified to phosphoserine: Ser447, Ser449, and Ser451. 2 coiled-coil regions span residues 584–633 (LTKM…VKKE) and 701–795 (LQIQ…DDDA).

The protein resides in the cytoplasm. It is found in the cytoskeleton. The protein localises to the microtubule organizing center. Its subcellular location is the centrosome. It localises to the spindle pole. This is Centrosomal protein of 95 kDa (Cep95) from Mus musculus (Mouse).